The chain runs to 544 residues: Probable protein kinase UbiB (544 aa).

Positions D123 to L501 constitute a Protein kinase domain. ATP contacts are provided by residues L129–V137 and K152. The active-site Proton acceptor is the D287. The chain crosses the membrane as a helical span at residues F500–Y520.

It belongs to the ABC1 family. UbiB subfamily.

It is found in the cell inner membrane. It participates in cofactor biosynthesis; ubiquinone biosynthesis [regulation]. Its function is as follows. Is probably a protein kinase regulator of UbiI activity which is involved in aerobic coenzyme Q (ubiquinone) biosynthesis. The chain is Probable protein kinase UbiB from Vibrio atlanticus (strain LGP32) (Vibrio splendidus (strain Mel32)).